A 352-amino-acid chain; its full sequence is C-X-C chemokine receptor type 4 (352 aa).

Residues 1–21 (MEGISIYTSDNYTEEMGSGDY) form an important for chemokine binding and signaling region. Topologically, residues 1-38 (MEGISIYTSDNYTEEMGSGDYDSIKEPCFREKNAHFNR) are extracellular. Tyr-7 carries the sulfotyrosine modification. An N-linked (GlcNAc...) asparagine glycan is attached at Asn-11. Position 12 is a sulfotyrosine (Tyr-12). O-linked (Xyl...) (chondroitin sulfate) serine glycosylation is present at Ser-18. Tyr-21 carries the sulfotyrosine modification. 2 cysteine pairs are disulfide-bonded: Cys-28/Cys-274 and Cys-109/Cys-186. Residues 39–63 (IFLPTIYSIIFLTGIVGNGLVILVM) traverse the membrane as a helical segment. Residues 64 to 77 (GYQKKLRSMTDKYR) are Cytoplasmic-facing. Residues 78 to 99 (LHLSVADLLFVITLPFWAVDAV) form a helical membrane-spanning segment. The segment at 94-97 (WAVD) is chemokine binding. Residues 100 to 110 (ANWYFGNFLCK) are Extracellular-facing. A helical membrane pass occupies residues 111–130 (AVHVIYTVNLYSSVLILAFI). A chemokine binding region spans residues 113-117 (HVIYT). At 131–154 (SLDRYLAIVHATNSQKPRKLLAEK) the chain is on the cytoplasmic side. The short motif at 133–135 (DRY) is the Important for signaling element. The involved in dimerization; when bound to chemokine stretch occupies residues 135-147 (YLAIVHATNSQKP). The chain crosses the membrane as a helical span at residues 155 to 174 (VVYVGVWIPALLLTIPGFIF). At 175 to 195 (ASVSEADDRFICDRFYPNDLW) the chain is on the extracellular side. Residues 186-190 (CDRFY) are chemokine binding, important for signaling. The involved in dimerization stretch occupies residues 191 to 210 (PNDLWVVVFQFQHIMVGLIL). A helical membrane pass occupies residues 196-216 (VVVFQFQHIMVGLILPGIVIL). At 217–241 (SCYCIIISKLSHSKGHQKRKALKTT) the chain is on the cytoplasmic side. Residues 242-261 (VILILAFFACWLPYYIGISI) traverse the membrane as a helical segment. Topologically, residues 262 to 282 (DSFILLEIIKQGCEFENTVHK) are extracellular. An involved in dimerization region spans residues 266-268 (LLE). Residues 283–302 (WISITEALAFFHCCLNPILY) form a helical membrane-spanning segment. The Cytoplasmic portion of the chain corresponds to 303-352 (AFLGAKFKTSAQHALTSVSRGSSLKILSKGKRGGHSSVSTESESSSFHSS). Ser-319 and Ser-321 each carry phosphoserine. A phosphoserine; by PKC and GRK6 mark is found at Ser-324 and Ser-325. The tract at residues 329–352 (LSKGKRGGHSSVSTESESSSFHSS) is disordered. Ser-330 bears the Phosphoserine; by GRK6 mark. Lys-331 participates in a covalent cross-link: Glycyl lysine isopeptide (Lys-Gly) (interchain with G-Cter in ubiquitin). Residues 337-352 (HSSVSTESESSSFHSS) show a composition bias toward low complexity. At Ser-339 the chain carries Phosphoserine; by GRK6. Phosphoserine occurs at positions 348 and 351.

The protein belongs to the G-protein coupled receptor 1 family. As to quaternary structure, monomer. Can form homodimers. Interacts with CD164. Interacts with ARRB2; the interaction is dependent on the C-terminal phosphorylation of CXCR4 and allows activation of MAPK1 and MAPK3. Interacts with ARR3; the interaction is dependent on the C-terminal phosphorylation of CXCR4 and modulates calcium mobilization. Interacts with RNF113A; the interaction, enhanced by CXCL12, promotes CXCR4 ubiquitination and subsequent degradation. Interacts (via the cytoplasmic C-terminal) with ITCH (via the WW domains I and II); the interaction, enhanced by CXCL12, promotes CXCR4 ubiquitination and leads to its degradation. Interacts with extracellular ubiquitin. Interacts with DBN1; this interaction is enhanced by antigenic stimulation. Following LPS binding, may form a complex with GDF5, HSP90AA1 and HSPA8. In terms of processing, phosphorylated on agonist stimulation. Rapidly phosphorylated on serine and threonine residues in the C-terminal. Phosphorylation at Ser-324 and Ser-325 leads to recruitment of ITCH, ubiquitination and protein degradation. Post-translationally, ubiquitinated after ligand binding, leading to its degradation. Ubiquitinated by ITCH at the cell membrane on agonist stimulation. The ubiquitin-dependent mechanism, endosomal sorting complex required for transport (ESCRT), then targets CXCR4 for lysosomal degradation. This process is dependent also on prior Ser-/Thr-phosphorylation in the C-terminal of CXCR4. Also binding of ARRB1 to STAM negatively regulates CXCR4 sorting to lysosomes though modulating ubiquitination of SFR5S. Sulfation is required for efficient binding of CXCL12/SDF-1alpha and promotes its dimerization. In terms of processing, O- and N-glycosylated. N-glycosylation can mask coreceptor function. The O-glycosylation chondroitin sulfate attachment does not affect interaction with CXCL12/SDF-1alpha nor its coreceptor activity.

Its subcellular location is the cell membrane. The protein resides in the cell junction. The protein localises to the early endosome. It is found in the late endosome. It localises to the lysosome. In terms of biological role, receptor for the C-X-C chemokine CXCL12/SDF-1 that transduces a signal by increasing intracellular calcium ion levels and enhancing MAPK1/MAPK3 activation. Involved in the AKT signaling cascade. Plays a role in regulation of cell migration, e.g. during wound healing. Acts as a receptor for extracellular ubiquitin; leading to enhanced intracellular calcium ions and reduced cellular cAMP levels. Binds bacterial lipopolysaccharide (LPS) et mediates LPS-induced inflammatory response, including TNF secretion by monocytes. Involved in hematopoiesis and in cardiac ventricular septum formation. Also plays an essential role in vascularization of the gastrointestinal tract, probably by regulating vascular branching and/or remodeling processes in endothelial cells. Involved in cerebellar development. In the CNS, could mediate hippocampal-neuron survival. The sequence is that of C-X-C chemokine receptor type 4 (CXCR4) from Cercocebus atys (Sooty mangabey).